The primary structure comprises 340 residues: Ubiquitin-like domain-containing CTD phosphatase (340 aa).

The Ubiquitin-like domain occupies 24 to 101 (LTLTVKWNGK…MTMIGTVEDD (78 aa)). The region spanning 151–312 (CRQGKKLLVL…VKLTQYLLTI (162 aa)) is the FCP1 homology domain. The segment at 151 to 312 (CRQGKKLLVL…VKLTQYLLTI (162 aa)) is phosphatase. Residues Asp161, Asp163, and Asp271 each contribute to the Mg(2+) site.

Mg(2+) serves as cofactor.

The protein resides in the nucleus. It carries out the reaction O-phospho-L-seryl-[protein] + H2O = L-seryl-[protein] + phosphate. The enzyme catalyses O-phospho-L-threonyl-[protein] + H2O = L-threonyl-[protein] + phosphate. Its function is as follows. Dephosphorylates 26S nuclear proteasomes, thereby decreasing their proteolytic activity. The dephosphorylation may prevent assembly of the core and regulatory particles (CP and RP) into mature 26S proteasome. The protein is Ubiquitin-like domain-containing CTD phosphatase of Arabidopsis thaliana (Mouse-ear cress).